Consider the following 128-residue polypeptide: Protein FAM229A (128 aa).

Residues 1–96 (MQSSPSTLGP…VATDQNPVRP (96 aa)) are disordered.

This sequence belongs to the FAM229 family.

In Mus musculus (Mouse), this protein is Protein FAM229A (Fam229a).